A 387-amino-acid polypeptide reads, in one-letter code: GTP-binding protein 10 (387 aa).

Residues 13 to 148 form the Obg domain; it reads GNFIDNLRLF…RVIHLDLKLI (136 aa). An OBG-type G domain is found at 149–344; sequence ADIGLVGFPN…LKNCIRKSLD (196 aa). GTP-binding positions include 155–162, 202–206, and 278–281; these read GFPNAGKS, DLPGL, and NKMD.

Belongs to the TRAFAC class OBG-HflX-like GTPase superfamily. OBG GTPase family.

The protein resides in the nucleus. It localises to the nucleolus. In terms of biological role, may be involved in the ribosome maturation process. The sequence is that of GTP-binding protein 10 (GTPBP10) from Bos taurus (Bovine).